The following is a 264-amino-acid chain: MNLLNMFNGYKKIPVEYFAQEESMEQLKDINTKIDNSEKKISLENFIDKCEKSDPISENDFLDYPEHIVRSYVKHNVESFIDNNKTNLLNKLLILFPESVFYMASCEKFITIFSKVKDNINGLLINSDKQTFLHKILTLEDSMIILESNIDLNVNQIDINGDTFVSNYYDNIDALYKKNNNTNYENHHTSSKKMIKFVELLVKKNYNVNRVDNINRSIINLCFRVNVNKSIIFSYKNMAYKQQYFFIDYYCLYNLFQMKKLIPL.

The stretch at 19-45 (AQEESMEQLKDINTKIDNSEKKISLEN) forms a coiled coil.

This is an uncharacterized protein from Acanthamoeba polyphaga mimivirus (APMV).